We begin with the raw amino-acid sequence, 311 residues long: Endosome-associated-trafficking regulator 1 (311 aa).

Residues 167–278 adopt a coiled-coil conformation; sequence RGNAENGTKN…KSENERLRLG (112 aa).

It belongs to the ENTR1 family.

It is found in the cytoplasm. The protein localises to the early endosome. It localises to the endosome. Its subcellular location is the recycling endosome. The protein resides in the midbody. It is found in the cytoskeleton. The protein localises to the microtubule organizing center. It localises to the centrosome. Its subcellular location is the cilium basal body. Functionally, endosome-associated protein that plays a role in membrane receptor sorting, cytokinesis and ciliogenesis. The sequence is that of Endosome-associated-trafficking regulator 1 from Danio rerio (Zebrafish).